A 369-amino-acid chain; its full sequence is Phospho-N-acetylmuramoyl-pentapeptide-transferase (369 aa).

The next 10 membrane-spanning stretches (helical) occupy residues 2 to 22 (IALLIGAGVALLVALIGTPLF), 55 to 75 (TVVVAAVLISYFVTHLIMWMM), 86 to 106 (GLLLLFLMVGMGFVGFLDDFI), 120 to 140 (AKLILQAAVGIIFAVLVLQFP), 163 to 183 (LAFGGTVVGAILFVLWSNLII), 196 to 216 (LDGLAAGASIMVFGAYTIMGI), 239 to 259 (PMDLALLAAILSAALVGFLWW), 266 to 286 (IFMGDTGSLAIGGAVAAFAIL), 291 to 311 (LLLAFIGGLFVLITLSVIIQV), and 348 to 368 (ILAGLFVAAGLGIFYAEWVVL).

Belongs to the glycosyltransferase 4 family. MraY subfamily. The cofactor is Mg(2+).

Its subcellular location is the cell membrane. It catalyses the reaction UDP-N-acetyl-alpha-D-muramoyl-L-alanyl-gamma-D-glutamyl-meso-2,6-diaminopimeloyl-D-alanyl-D-alanine + di-trans,octa-cis-undecaprenyl phosphate = di-trans,octa-cis-undecaprenyl diphospho-N-acetyl-alpha-D-muramoyl-L-alanyl-D-glutamyl-meso-2,6-diaminopimeloyl-D-alanyl-D-alanine + UMP. It participates in cell wall biogenesis; peptidoglycan biosynthesis. In terms of biological role, catalyzes the initial step of the lipid cycle reactions in the biosynthesis of the cell wall peptidoglycan: transfers peptidoglycan precursor phospho-MurNAc-pentapeptide from UDP-MurNAc-pentapeptide onto the lipid carrier undecaprenyl phosphate, yielding undecaprenyl-pyrophosphoryl-MurNAc-pentapeptide, known as lipid I. This is Phospho-N-acetylmuramoyl-pentapeptide-transferase from Paenarthrobacter aurescens (strain TC1).